Reading from the N-terminus, the 847-residue chain is Alpha-glucuronidase A (847 aa).

The signal sequence occupies residues 1–22 (MRSFLLLTALLGVAAVAEDGLA). 13 N-linked (GlcNAc...) asparagine glycosylation sites follow: Asn48, Asn78, Asn227, Asn315, Asn349, Asn457, Asn472, Asn534, Asn583, Asn689, Asn738, Asn739, and Asn769.

This sequence belongs to the glycosyl hydrolase 67 family.

The protein resides in the secreted. It carries out the reaction an alpha-D-glucuronoside + H2O = D-glucuronate + an alcohol. Its function is as follows. Alpha-glucuronidase involved in the hydrolysis of xylan, a major structural heterogeneous polysaccharide found in plant biomass representing the second most abundant polysaccharide in the biosphere, after cellulose. Releases 4-O-methylglucuronic acid from xylan. The polypeptide is Alpha-glucuronidase A (aguA) (Emericella nidulans (strain FGSC A4 / ATCC 38163 / CBS 112.46 / NRRL 194 / M139) (Aspergillus nidulans)).